A 294-amino-acid polypeptide reads, in one-letter code: Pyridoxal 5'-phosphate synthase subunit PdxS (294 aa).

Asp24 provides a ligand contact to D-ribose 5-phosphate. Residue Lys81 is the Schiff-base intermediate with D-ribose 5-phosphate of the active site. Gly153 is a binding site for D-ribose 5-phosphate. Position 165 (Arg165) interacts with D-glyceraldehyde 3-phosphate. Residues Gly214 and 235–236 (GS) each bind D-ribose 5-phosphate.

Belongs to the PdxS/SNZ family. As to quaternary structure, in the presence of PdxT, forms a dodecamer of heterodimers.

The enzyme catalyses aldehydo-D-ribose 5-phosphate + D-glyceraldehyde 3-phosphate + L-glutamine = pyridoxal 5'-phosphate + L-glutamate + phosphate + 3 H2O + H(+). It participates in cofactor biosynthesis; pyridoxal 5'-phosphate biosynthesis. Catalyzes the formation of pyridoxal 5'-phosphate from ribose 5-phosphate (RBP), glyceraldehyde 3-phosphate (G3P) and ammonia. The ammonia is provided by the PdxT subunit. Can also use ribulose 5-phosphate and dihydroxyacetone phosphate as substrates, resulting from enzyme-catalyzed isomerization of RBP and G3P, respectively. The sequence is that of Pyridoxal 5'-phosphate synthase subunit PdxS from Bacillus pumilus (strain SAFR-032).